The following is a 156-amino-acid chain: Large ribosomal subunit protein uL15 (156 aa).

Residues 25-49 (RGIGCGKGKTSGRGHKGQKARSGTS) are disordered. Over residues 34-43 (TSGRGHKGQK) the composition is skewed to basic residues.

This sequence belongs to the universal ribosomal protein uL15 family. As to quaternary structure, part of the 50S ribosomal subunit.

Binds to the 23S rRNA. The protein is Large ribosomal subunit protein uL15 of Wolbachia sp. subsp. Brugia malayi (strain TRS).